The primary structure comprises 190 residues: Nuclear transcription factor Y subunit A-7 (190 aa).

Positions 1 to 33 are disordered; sequence MTSSIHELSDNIGSHEKQEQRDSHFQPPIPSAR. The segment covering 7 to 24 has biased composition (basic and acidic residues); it reads ELSDNIGSHEKQEQRDSH. Positions 103–126 match the Subunit association domain (SAD) motif; the sequence is FVNAKQYHGILRRRQSRARLESQN. The segment at residues 133-158 is a DNA-binding region (NFYA/HAP2-type); sequence KPYLHESRHLHAIRRPRGCGGRFLNA. The segment at 147–190 is disordered; it reads RPRGCGGRFLNAKKEDEHHEDSSHEEKSNLSAGKSAMAASSGTS. Over residues 158 to 174 the composition is skewed to basic and acidic residues; sequence AKKEDEHHEDSSHEEKS. Residues 177–190 show a composition bias toward low complexity; the sequence is SAGKSAMAASSGTS.

It belongs to the NFYA/HAP2 subunit family. Heterotrimeric transcription factor composed of three components, NF-YA, NF-YB and NF-YC. NF-YB and NF-YC must interact and dimerize for NF-YA association and DNA binding.

Its subcellular location is the nucleus. Functionally, stimulates the transcription of various genes by recognizing and binding to a CCAAT motif in promoters. The protein is Nuclear transcription factor Y subunit A-7 (NFYA7) of Arabidopsis thaliana (Mouse-ear cress).